The primary structure comprises 546 residues: T-complex protein 1 subunit zeta (546 aa).

S2 carries the N-acetylserine modification. S249 carries the post-translational modification Phosphoserine.

The protein belongs to the TCP-1 chaperonin family. As to quaternary structure, heterooligomeric complex of about 850 to 900 kDa that forms two stacked rings, 12 to 16 nm in diameter.

The protein localises to the cytoplasm. Its function is as follows. Molecular chaperone; assists the folding of proteins upon ATP hydrolysis. Known to play a role, in vitro, in the folding of actin and tubulin. In yeast may play a role in mitotic spindle formation. The chain is T-complex protein 1 subunit zeta (CCT6) from Saccharomyces cerevisiae (strain ATCC 204508 / S288c) (Baker's yeast).